A 1002-amino-acid chain; its full sequence is Transposase for transposon gamma-delta (1002 aa).

This sequence belongs to the transposase 7 family.

Its function is as follows. Required for transposition of transposon Tn1000. This chain is Transposase for transposon gamma-delta (tnpA), found in Escherichia coli (strain K12).